The sequence spans 1481 residues: Chromosome partition protein MukB (1481 aa).

34 to 41 (GGNGAGKS) provides a ligand contact to ATP. 5 coiled-coil regions span residues 338-480 (SLVQ…QAYQ), 509-604 (QHLA…APVW), 780-805 (RAARENRLEALYQERDSLAERYATLS), 835-1116 (EAEI…AKAG), and 1210-1265 (EAIE…LQAV). The segment at 666–783 (PSGAEDSRMI…EVPLFGRAAR (118 aa)) is flexible hinge.

It belongs to the SMC family. MukB subfamily. As to quaternary structure, homodimerization via its hinge domain. Binds to DNA via its C-terminal region. Interacts, and probably forms a ternary complex, with MukE and MukF via its C-terminal region. The complex formation is stimulated by calcium or magnesium. Interacts with tubulin-related protein FtsZ.

The protein localises to the cytoplasm. It is found in the nucleoid. In terms of biological role, plays a central role in chromosome condensation, segregation and cell cycle progression. Functions as a homodimer, which is essential for chromosome partition. Involved in negative DNA supercoiling in vivo, and by this means organize and compact chromosomes. May achieve or facilitate chromosome segregation by condensation DNA from both sides of a centrally located replisome during cell division. The sequence is that of Chromosome partition protein MukB from Yersinia enterocolitica serotype O:8 / biotype 1B (strain NCTC 13174 / 8081).